A 51-amino-acid polypeptide reads, in one-letter code: Sperm protamine P1 (51 aa).

Intrachain disulfides connect C7-C15 and C40-C48.

Belongs to the protamine P1 family. In terms of assembly, cross-linked by interchain disulfide bonds around the DNA-helix. In terms of processing, phosphorylated by SRPK1. As to expression, testis.

It is found in the nucleus. The protein resides in the chromosome. Functionally, protamines substitute for histones in the chromatin of sperm during the haploid phase of spermatogenesis. They compact sperm DNA into a highly condensed, stable and inactive complex. The polypeptide is Sperm protamine P1 (PRM1) (Bos taurus (Bovine)).